The primary structure comprises 247 residues: Ribosomal RNA small subunit methyltransferase G (247 aa).

Residues glycine 84, phenylalanine 89, 136–137 (AE), and arginine 155 contribute to the S-adenosyl-L-methionine site.

This sequence belongs to the methyltransferase superfamily. RNA methyltransferase RsmG family.

It is found in the cytoplasm. Specifically methylates the N7 position of a guanine in 16S rRNA. In Prochlorococcus marinus (strain MIT 9313), this protein is Ribosomal RNA small subunit methyltransferase G.